A 340-amino-acid polypeptide reads, in one-letter code: Glucokinase (340 aa).

Gly-17 to Thr-22 is a binding site for ATP.

It belongs to the bacterial glucokinase family.

Its subcellular location is the cytoplasm. The enzyme catalyses D-glucose + ATP = D-glucose 6-phosphate + ADP + H(+). The protein is Glucokinase of Agrobacterium fabrum (strain C58 / ATCC 33970) (Agrobacterium tumefaciens (strain C58)).